We begin with the raw amino-acid sequence, 140 residues long: Mercuric transport protein MerC (140 aa).

Residues 2–10 lie on the Cytoplasmic side of the membrane; that stretch reads GLMTRIADK. A helical transmembrane segment spans residues 11 to 31; it reads TGALGSVVSAMGCAACFPALA. Residues Gly-22 and Ala-25 each coordinate Hg(2+). The Periplasmic segment spans residues 32-46; it reads SFGAAIGLGFLSQYE. Residues 47–67 traverse the membrane as a helical segment; that stretch reads GLFISRLLPLFAALAFLANAL. Topologically, residues 68-78 are cytoplasmic; sequence GWFSHRQWLRS. A helical membrane pass occupies residues 79–99; sequence LLGMIGPAIVFAATVWLLGNW. Over 100 to 106 the chain is Periplasmic; that stretch reads WTANLMY. The helical transmembrane segment at 107-127 threads the bilayer; it reads VGLALMIGVSIWDFVSPAHRR. Topologically, residues 128–140 are cytoplasmic; sequence CGPDGCELPAKRL.

It localises to the cell inner membrane. With respect to regulation, uptake of Hg(2+) is decreased by iodoacetamide and iodoacetate, and is completely inhibited by the thiol-modifying reagent N-ethylmaleimide (NEM). Its function is as follows. Involved in mercuric ion uptake and binding. MerC-mediated Hg(2+) uptake does not require MerP. The protein is Mercuric transport protein MerC of Shigella flexneri.